Reading from the N-terminus, the 932-residue chain is Receptor-like protein 9a (932 aa).

An N-terminal signal peptide occupies residues 1–28 (MLIFTIPQFFFAAWVMVVSLQMQGYISC). The Extracellular portion of the chain corresponds to 29 to 888 (IEKERKGLLE…DDETAIDMET (860 aa)). N-linked (GlcNAc...) asparagine glycosylation is found at N53, N80, and N90. 28 LRR repeats span residues 97–122 (FEEL…GYKS), 126–152 (LKKL…AASS), 154–174 (RTLI…ELKD), 175–200 (LSNL…VLHK), 202–222 (HALD…GLCQ), 223–246 (LKNL…CFSS), 247–273 (LTQL…NLDS), 275–295 (EYLS…LIAN), 296–320 (LSKL…ISLQ), 322–345 (KFRL…LQQQ), 346–368 (KDLR…WFLE), 370–393 (YPKL…RLLV), 394–417 (HSLH…IGHV), 418–441 (LPNI…SFSE), 443–466 (KKIF…FCIG), 468–491 (SSLS…PMKL), 492–514 (ESLR…LIHS), 516–535 (GLVF…PSWF), 536–560 (GGFY…TLFN), 561–583 (VSFQ…HFSF), 585–605 (HMGL…STLL), 606–629 (ENVM…VSNR), 631–652 (FLYL…LCEL), 653–676 (KSIR…LNNV), 745–769 (FKFM…LGDF), 770–792 (QRIR…SFSN), 794–817 (TDIE…LTKL), and 819–842 (YIVV…KFLS). N-linked (GlcNAc...) asparagine glycosylation is present at N140. N-linked (GlcNAc...) asparagine glycans are attached at residues N261 and N295. Residues N352 and N380 are each glycosylated (N-linked (GlcNAc...) asparagine). N-linked (GlcNAc...) asparagine glycans are attached at residues N420, N425, and N454. 3 N-linked (GlcNAc...) asparagine glycosylation sites follow: N524, N551, and N560. Residues N666 and N675 are each glycosylated (N-linked (GlcNAc...) asparagine). 2 N-linked (GlcNAc...) asparagine glycosylation sites follow: N776 and N792. Residues N824, N829, N860, and N866 are each glycosylated (N-linked (GlcNAc...) asparagine). The helical transmembrane segment at 889-909 (FYWSLFATYGITWMAFIVFLC) threads the bilayer. At 910 to 932 (FDSPWRQAWFRLVNVFVSFLKCV) the chain is on the cytoplasmic side.

It belongs to the RLP family.

The protein resides in the cell membrane. The sequence is that of Receptor-like protein 9a from Arabidopsis thaliana (Mouse-ear cress).